Reading from the N-terminus, the 287-residue chain is 4-hydroxybenzoate octaprenyltransferase (287 aa).

Helical transmembrane passes span 21–41 (VGIF…AKGA), 44–64 (FKIA…GCIV), 91–111 (VTEA…LVLL), 112–132 (LNRL…VYPF), 139–159 (LPQL…FAAT), 160–180 (VGHV…WPIV), 211–231 (LMIG…GWYL), 235–255 (YWFY…QFLI), and 263–283 (CFAA…GILL).

The protein belongs to the UbiA prenyltransferase family. Mg(2+) serves as cofactor.

The protein localises to the cell inner membrane. It carries out the reaction all-trans-octaprenyl diphosphate + 4-hydroxybenzoate = 4-hydroxy-3-(all-trans-octaprenyl)benzoate + diphosphate. It functions in the pathway cofactor biosynthesis; ubiquinone biosynthesis. Its function is as follows. Catalyzes the prenylation of para-hydroxybenzoate (PHB) with an all-trans polyprenyl group. Mediates the second step in the final reaction sequence of ubiquinone-8 (UQ-8) biosynthesis, which is the condensation of the polyisoprenoid side chain with PHB, generating the first membrane-bound Q intermediate 3-octaprenyl-4-hydroxybenzoate. The sequence is that of 4-hydroxybenzoate octaprenyltransferase from Coxiella burnetii (strain CbuK_Q154) (Coxiella burnetii (strain Q154)).